Reading from the N-terminus, the 1162-residue chain is Nucleoporin nup132 (1162 aa).

Belongs to the nucleoporin Nup133 family. Component of the npc107-120 complex which consists of nup85, nup107, nup120, nup131, nup132 and seh1. Interacts with nup107.

It is found in the nucleus envelope. Functions as a component of the nuclear pore complex (NPC). NPC components, collectively referred to as nucleoporins (NUPs), can play the role of both NPC structural components and of docking or interaction partners for transiently associated nuclear transport factors. Active directional transport is assured by both, a Phe-Gly (FG) repeat affinity gradient for these transport factors across the NPC and a transport cofactor concentration gradient across the nuclear envelope. In Schizosaccharomyces pombe (strain 972 / ATCC 24843) (Fission yeast), this protein is Nucleoporin nup132 (nup132).